Consider the following 225-residue polypeptide: Uracil-DNA glycosylase (225 aa).

The active-site Proton acceptor is the Asp65.

It belongs to the uracil-DNA glycosylase (UDG) superfamily. UNG family.

Its subcellular location is the cytoplasm. The enzyme catalyses Hydrolyzes single-stranded DNA or mismatched double-stranded DNA and polynucleotides, releasing free uracil.. In terms of biological role, excises uracil residues from the DNA which can arise as a result of misincorporation of dUMP residues by DNA polymerase or due to deamination of cytosine. This is Uracil-DNA glycosylase from Clostridium botulinum (strain Alaska E43 / Type E3).